The chain runs to 249 residues: Probable phosphatase VVA0289 (249 aa).

The Zn(2+) site is built by His-8, His-10, His-16, His-41, Glu-74, His-102, His-132, Asp-194, and His-196.

This sequence belongs to the PHP family. It depends on Zn(2+) as a cofactor.

This is Probable phosphatase VVA0289 from Vibrio vulnificus (strain YJ016).